The following is a 220-amino-acid chain: Ribose-5-phosphate isomerase A (220 aa).

Substrate contacts are provided by residues Thr28 to Thr31, Asp81 to Asp84, and Lys94 to Gly97. The Proton acceptor role is filled by Glu103. Substrate is bound at residue Lys121.

The protein belongs to the ribose 5-phosphate isomerase family. As to quaternary structure, homodimer.

It catalyses the reaction aldehydo-D-ribose 5-phosphate = D-ribulose 5-phosphate. Its pathway is carbohydrate degradation; pentose phosphate pathway; D-ribose 5-phosphate from D-ribulose 5-phosphate (non-oxidative stage): step 1/1. In terms of biological role, catalyzes the reversible conversion of ribose-5-phosphate to ribulose 5-phosphate. This chain is Ribose-5-phosphate isomerase A, found in Shewanella baltica (strain OS223).